The primary structure comprises 398 residues: Probable aminomethyltransferase (398 aa).

The protein belongs to the GcvT family. As to quaternary structure, the glycine cleavage system is composed of four proteins: P, T, L and H.

It carries out the reaction N(6)-[(R)-S(8)-aminomethyldihydrolipoyl]-L-lysyl-[protein] + (6S)-5,6,7,8-tetrahydrofolate = N(6)-[(R)-dihydrolipoyl]-L-lysyl-[protein] + (6R)-5,10-methylene-5,6,7,8-tetrahydrofolate + NH4(+). The glycine cleavage system catalyzes the degradation of glycine. This Thermococcus gammatolerans (strain DSM 15229 / JCM 11827 / EJ3) protein is Probable aminomethyltransferase.